A 352-amino-acid chain; its full sequence is 4-hydroxy-3-methylbut-2-en-1-yl diphosphate synthase (flavodoxin) (352 aa).

4 residues coordinate [4Fe-4S] cluster: Cys-263, Cys-266, Cys-298, and Glu-305.

Belongs to the IspG family. [4Fe-4S] cluster is required as a cofactor.

It carries out the reaction (2E)-4-hydroxy-3-methylbut-2-enyl diphosphate + oxidized [flavodoxin] + H2O + 2 H(+) = 2-C-methyl-D-erythritol 2,4-cyclic diphosphate + reduced [flavodoxin]. It participates in isoprenoid biosynthesis; isopentenyl diphosphate biosynthesis via DXP pathway; isopentenyl diphosphate from 1-deoxy-D-xylulose 5-phosphate: step 5/6. Functionally, converts 2C-methyl-D-erythritol 2,4-cyclodiphosphate (ME-2,4cPP) into 1-hydroxy-2-methyl-2-(E)-butenyl 4-diphosphate. This is 4-hydroxy-3-methylbut-2-en-1-yl diphosphate synthase (flavodoxin) from Sulfurimonas denitrificans (strain ATCC 33889 / DSM 1251) (Thiomicrospira denitrificans (strain ATCC 33889 / DSM 1251)).